We begin with the raw amino-acid sequence, 436 residues long: F-box/LRR-repeat protein 20 (436 aa).

Positions Ala-22–Ile-68 constitute an F-box domain. LRR repeat units lie at residues Gln-74–Gly-100, Cys-101–Gly-126, Cys-127–Ser-152, Cys-153–Trp-178, Cys-179–Gly-204, Cys-205–Thr-230, Cys-231–Gly-256, Cys-257–Arg-282, Cys-283–Glu-308, Cys-309–His-334, Cys-335–Asn-363, Cys-364–Asp-388, and Cys-389–Ala-414. The residue at position 417 (Thr-417) is a Phosphothreonine. At Ser-421 the chain carries Phosphoserine.

As to quaternary structure, interacts with SKP1 and CUL1. As to expression, highly expressed in brain.

It is found in the cytoplasm. Functionally, substrate-recognition component of the SCF (SKP1-CUL1-F-box protein)-type E3 ubiquitin ligase complex. Isoform 3 regulates neural transmission by binding and ubiquitinating RIMS1, a modulator of presynaptic plasticity. The chain is F-box/LRR-repeat protein 20 (Fbxl20) from Mus musculus (Mouse).